The following is a 432-amino-acid chain: Phosphomethylpyrimidine synthase (432 aa).

Residues Asn-66, Met-95, Tyr-124, His-163, 185–187 (SRG), 226–229 (DGLR), and Glu-265 contribute to the substrate site. His-269 is a Zn(2+) binding site. Residue Tyr-292 participates in substrate binding. Position 333 (His-333) interacts with Zn(2+). [4Fe-4S] cluster-binding residues include Cys-409, Cys-412, and Cys-416.

This sequence belongs to the ThiC family. Requires [4Fe-4S] cluster as cofactor.

It catalyses the reaction 5-amino-1-(5-phospho-beta-D-ribosyl)imidazole + S-adenosyl-L-methionine = 4-amino-2-methyl-5-(phosphooxymethyl)pyrimidine + CO + 5'-deoxyadenosine + formate + L-methionine + 3 H(+). It participates in cofactor biosynthesis; thiamine diphosphate biosynthesis. Catalyzes the synthesis of the hydroxymethylpyrimidine phosphate (HMP-P) moiety of thiamine from aminoimidazole ribotide (AIR) in a radical S-adenosyl-L-methionine (SAM)-dependent reaction. This Thermoanaerobacter sp. (strain X514) protein is Phosphomethylpyrimidine synthase.